A 605-amino-acid chain; its full sequence is Tungsten-containing aldehyde ferredoxin oxidoreductase (605 aa).

Positions 76, 93, 95, 182, 183, 185, and 186 each coordinate tungstopterin. The [4Fe-4S] cluster site is built by cysteine 288, cysteine 291, and cysteine 295. 7 residues coordinate tungstopterin: aspartate 338, leucine 342, aspartate 343, arginine 444, lysine 450, aspartate 489, and leucine 493. [4Fe-4S] cluster is bound at residue cysteine 494. Leucine 495 provides a ligand contact to tungstopterin.

The protein belongs to the AOR/FOR family. In terms of assembly, monomer. Homodimer. [4Fe-4S] cluster is required as a cofactor. It depends on tungstopterin as a cofactor.

The enzyme catalyses an aldehyde + 2 oxidized [2Fe-2S]-[ferredoxin] + H2O = a carboxylate + 2 reduced [2Fe-2S]-[ferredoxin] + 3 H(+). With respect to regulation, inhibited by arsenite, iodoacetate and cyanide. In terms of biological role, aldehyde ferredoxin oxidoreductase with a broad substrate specificity. Catalyzes the oxidation of a range of aliphatic aldehydes to their corresponding carboxylic acids. In vitro can use crotonaldehyde, acetaldehyde, formaldehyde, butyraldehyde or glyceraldehyde as substrate, using methyl viologen or ferredoxin, but not NAD(P), as the electron acceptor. Does not oxidize glucose or glyceraldehyde 3-phosphate. May be involved in a pyroglycolytic pathway. The sequence is that of Tungsten-containing aldehyde ferredoxin oxidoreductase from Pyrococcus furiosus (strain ATCC 43587 / DSM 3638 / JCM 8422 / Vc1).